Here is a 243-residue protein sequence, read N- to C-terminus: Adenosylcobinamide-GDP ribazoletransferase (243 aa).

Helical transmembrane passes span 31–48 (LLFYPLVGLLFGVLLWVL), 61–81 (AALLLTAWVLLSGGLHLDGLA), 109–129 (IAVVTLVLVLLLKFTALVALI), 134–154 (GFALLLAPLIGRGALLGLFLC), and 188–208 (LLLGGYSGLWAVLLATVLFFW).

Belongs to the CobS family. Mg(2+) serves as cofactor.

The protein resides in the cell inner membrane. The catalysed reaction is alpha-ribazole + adenosylcob(III)inamide-GDP = adenosylcob(III)alamin + GMP + H(+). The enzyme catalyses alpha-ribazole 5'-phosphate + adenosylcob(III)inamide-GDP = adenosylcob(III)alamin 5'-phosphate + GMP + H(+). It participates in cofactor biosynthesis; adenosylcobalamin biosynthesis; adenosylcobalamin from cob(II)yrinate a,c-diamide: step 7/7. Its function is as follows. Joins adenosylcobinamide-GDP and alpha-ribazole to generate adenosylcobalamin (Ado-cobalamin). Also synthesizes adenosylcobalamin 5'-phosphate from adenosylcobinamide-GDP and alpha-ribazole 5'-phosphate. This is Adenosylcobinamide-GDP ribazoletransferase from Pseudomonas fluorescens (strain ATCC BAA-477 / NRRL B-23932 / Pf-5).